Consider the following 694-residue polypeptide: U-box domain-containing protein 1 (694 aa).

The U-box domain maps to 292–366 (NIPDEFRCPI…HQWCYENNVK (75 aa)). ARM repeat units lie at residues 392-432 (SENK…LLAK), 435-474 (MDNRRIIAEVGAIPFLVTLLVSKDSRIQEHVVTALFNLSI), 476-516 (DNNK…SLSM), 519-558 (DCKVQIGASSRAIPALVGLLKEGTIIGKRDAATALFNLAV), 560-599 (NPNKLSIVKSGAVTLLVELLMDDKAGITDDSLAVLAVLLG), 601-641 (SEGL…GLCK), and 646-685 (LVAMRLLANPRSIPSLQSLAADGSLRARRKADALLRLLNR).

In terms of assembly, interacts with LYK3. Binds to NORK/DMI2. Post-translationally, phosphorylated by LYK3 in vitro. Phosphorylated by NORK/DMI2. As to expression, present ubiquitously at very low levels during nonsymbiotic growth. Accumulates in roots and nodules during symbiotic growth with rhizobia and mycorrhiza.

The protein resides in the cell membrane. The enzyme catalyses S-ubiquitinyl-[E2 ubiquitin-conjugating enzyme]-L-cysteine + [acceptor protein]-L-lysine = [E2 ubiquitin-conjugating enzyme]-L-cysteine + N(6)-ubiquitinyl-[acceptor protein]-L-lysine.. It participates in protein modification; protein ubiquitination. Its function is as follows. Exhibits U-box-dependent E3 ubiquitin ligase activity in vitro. Negatively modulates successive stages of infection and development of rhizobial (e.g. Sinorhizobium meliloti) and arbuscular mycorrhizal fungi (AM, e.g. Rhizophagus irregularis) symbioses, in an ubiquitin ligase activity-dependent manner. Negative regulator of the LYK3 signaling pathway leading to nitrogen-fixing symbiosis (e.g. infection and nodulation) by rhizobia. May be involved in the discrimination of rhizobium strains producing variant Nod factors. The polypeptide is U-box domain-containing protein 1 (Medicago truncatula (Barrel medic)).